We begin with the raw amino-acid sequence, 511 residues long: MNAAFQQPVTDSKTGDAPAILEMRGISQIFPGVKALDNVSIALHPGTVTALIGENGAGKSTLVKILTGIYRPNEGEILVDGQPTSFASAQAAIDAGVTAIHQETVLFDELTVAENIFLGHAPRTRLRTIDWQTMNSRSKTLLTALESNIDPTIRLKDLSIAQRHLVAIARALSIEARIVIMDEPTAALSRKEIDDLFRIVRGLKDQGKAILFISHKFDELYEIADDFVVFRDGRAVGQGRLKETPQDEIVRMMVGRDVENVFPKIDVAIGGPVLEVEKYCHRTEFRDVSLTLRRGEILGIYGLIGAGRSELAQSLFGVTKPLSGRLTLEGREISINSPHDAIKAGIVYVPEERGRHGLALPMPIYQNMTLPSLARTSRKGFLKAAEEFALARKYAERLDLRAAALSVPVGTLSGGNQQKVVIGKWLATMPKVIILDEPTKGIDIGSKAAVHGFISELAAEGLSIIMISSELPEIIGMSDRVLVMKEGLSVGLFERDQLSPEALVRAATGNA.

ABC transporter domains follow at residues 21–257 and 256–511; these read LEMR…VGRD and RDVE…TGNA. 53 to 60 contributes to the ATP binding site; sequence GENGAGKS.

Belongs to the ABC transporter superfamily. Ribose importer (TC 3.A.1.2.1) family. In terms of assembly, the complex is composed of an ATP-binding protein (RbsA), two transmembrane proteins (RbsC) and a solute-binding protein (RbsB).

The protein resides in the cell inner membrane. It carries out the reaction D-ribose(out) + ATP + H2O = D-ribose(in) + ADP + phosphate + H(+). Its function is as follows. Part of the ABC transporter complex RbsABC involved in ribose import. Responsible for energy coupling to the transport system. This chain is Ribose import ATP-binding protein RbsA 3, found in Rhizobium etli (strain ATCC 51251 / DSM 11541 / JCM 21823 / NBRC 15573 / CFN 42).